The primary structure comprises 485 residues: MGFEIAKTNSILSKLATNEEHGENSPYFDGWKAYDSDPFHPLKNPNGVIQMGLAENQLCLDLIEDWIKRNPKGSICSEGIKSFKAIANFQDYHGLPEFRKAIAKFMEKTRGGRVRFDPERVVMAGGATGANETIIFCLADPGDAFLVPSPYYPAFNRDLRWRTGVQLIPIHCESSNNFKITSKAVKEAYENAQKSNIKVKGLILTNPSNPLGTTLDKDTLKSVLSFTNQHNIHLVCDEIYAATVFDTPQFVSIAEILDEQEMTYCNKDLVHIVYSLSKDMGLPGFRVGIIYSFNDDVVNCARKMSSFGLVSTQTQYFLAAMLSDEKFVDNFLRESAMRLGKRHKHFTNGLEVVGIKCLKNNAGLFCWMDLRPLLRESTFDSEMSLWRVIINDVKLNVSPGSSFECQEPGWFRVCFANMDDGTVDIALARIRRFVGVEKSGDKSSSMEKKQQWKKNNLRLSFSKRMYDESVLSPLSSPIPPSPLVR.

Substrate contacts are provided by Glu-55 and Tyr-92. Lys-278 bears the N6-(pyridoxal phosphate)lysine mark. Residue Ser-460 is modified to Phosphoserine.

The protein belongs to the class-I pyridoxal-phosphate-dependent aminotransferase family. In terms of assembly, homodimer and heterodimer. In vivo, the relevance of heterodimerization with other ACS enzymes is however unsure. Pyridoxal 5'-phosphate is required as a cofactor. Post-translationally, phosphorylated on Ser 460; phosphorylation may regulate its turnover. May be processed at its C-terminus.

It carries out the reaction S-adenosyl-L-methionine = 1-aminocyclopropane-1-carboxylate + S-methyl-5'-thioadenosine + H(+). It participates in alkene biosynthesis; ethylene biosynthesis via S-adenosyl-L-methionine; ethylene from S-adenosyl-L-methionine: step 1/2. In terms of biological role, 1-aminocyclopropane-1-carboxylate synthase (ACS) enzymes catalyze the conversion of S-adenosyl-L-methionine (SAM) into 1-aminocyclopropane-1-carboxylate (ACC), a direct precursor of ethylene. The sequence is that of 1-aminocyclopropane-1-carboxylate synthase 2 (ACS2) from Solanum lycopersicum (Tomato).